The sequence spans 311 residues: MSDILNVSQQREAITKAAAYISAILEPHFKNTTNFEPPRTLIICGSGLGGISTKLSRDNPPPVTVPYQDIPGFKKSTVPGHSGTLMFGSMNGSPVVLMNGRLHGYEGNTLFETTFPIRVLNHMGHVRNLIVTNAAGGINAKYQACDLMCIYDHLNIPGLAGQHPLRGPNLDEDGPRFLALSDAYDLELRKLLFKKWKELKIQRPLHEGTYTFVSGPTFETRAESKMIRMLGGDAVGMSTVPEVIVARHCGWRVLALSLITNTCVVDSPASALDESPVPLEKGKATHAEVLENGKIASNDVQNLIAAVMGEL.

Ser-2 carries the post-translational modification N-acetylserine. Phosphate contacts are provided by residues Ser-46, His-81, 101-103 (RLH), and Ala-134. Glu-219 lines the a purine D-ribonucleoside pocket. Residue Ser-238 participates in phosphate binding. Residue Asn-261 participates in a purine D-ribonucleoside binding. Ser-275 carries the phosphoserine modification.

The protein belongs to the PNP/MTAP phosphorylase family.

The catalysed reaction is a purine D-ribonucleoside + phosphate = a purine nucleobase + alpha-D-ribose 1-phosphate. It participates in purine metabolism; purine nucleoside salvage. Functionally, the purine nucleoside phosphorylases catalyze the phosphorolytic breakdown of the N-glycosidic bond in the beta-(deoxy)ribonucleoside molecules, with the formation of the corresponding free purine bases and pentose-1-phosphate. Cleaves guanosine and inosine. The sequence is that of Purine nucleoside phosphorylase (PNP1) from Saccharomyces cerevisiae (strain ATCC 204508 / S288c) (Baker's yeast).